A 452-amino-acid chain; its full sequence is Adenylyltransferase and sulfurtransferase MOCS3 (452 aa).

ATP-binding positions include glycine 99, aspartate 120, serine 127 to arginine 131, lysine 144, and aspartate 188 to asparagine 189. Cysteine 230 and cysteine 233 together coordinate Zn(2+). Residue cysteine 247 is the Glycyl thioester intermediate; for adenylyltransferase activity of the active site. Zn(2+)-binding residues include cysteine 305 and cysteine 308. Residues lysine 354–proline 450 enclose the Rhodanese domain. Residue cysteine 409 is the Cysteine persulfide intermediate; for sulfurtransferase activity of the active site.

It in the N-terminal section; belongs to the HesA/MoeB/ThiF family. UBA4 subfamily. Requires Zn(2+) as cofactor.

The protein resides in the cytoplasm. The protein localises to the cytosol. It carries out the reaction [molybdopterin-synthase sulfur-carrier protein]-C-terminal Gly-Gly + ATP + H(+) = [molybdopterin-synthase sulfur-carrier protein]-C-terminal Gly-Gly-AMP + diphosphate. The catalysed reaction is [molybdopterin-synthase sulfur-carrier protein]-C-terminal Gly-Gly-AMP + S-sulfanyl-L-cysteinyl-[cysteine desulfurase] + AH2 = [molybdopterin-synthase sulfur-carrier protein]-C-terminal-Gly-aminoethanethioate + L-cysteinyl-[cysteine desulfurase] + A + AMP + 2 H(+). The protein operates within tRNA modification; 5-methoxycarbonylmethyl-2-thiouridine-tRNA biosynthesis. It participates in cofactor biosynthesis; molybdopterin biosynthesis. In terms of biological role, plays a central role in 2-thiolation of mcm(5)S(2)U at tRNA wobble positions of cytosolic tRNA(Lys), tRNA(Glu) and tRNA(Gln). Also essential during biosynthesis of the molybdenum cofactor. Acts by mediating the C-terminal thiocarboxylation of sulfur carriers URM1 and MOCS2A. Its N-terminus first activates URM1 and MOCS2A as acyl-adenylates (-COAMP), then the persulfide sulfur on the catalytic cysteine is transferred to URM1 and MOCS2A to form thiocarboxylation (-COSH) of their C-terminus. The reaction probably involves hydrogen sulfide that is generated from the persulfide intermediate and that acts as a nucleophile towards URM1 and MOCS2A. Subsequently, a transient disulfide bond is formed. Does not use thiosulfate as sulfur donor; NFS1 probably acting as a sulfur donor for thiocarboxylation reactions. The chain is Adenylyltransferase and sulfurtransferase MOCS3 from Drosophila virilis (Fruit fly).